The sequence spans 218 residues: Major NAD(P)H-flavin oxidoreductase (218 aa).

FMN contacts are provided by residues 12 to 16 (RYTSK) and N73. NAD(+) is bound at residue 154–159 (LARLNI). Residues 165–166 (EG) and 206–208 (KSR) contribute to the FMN site.

The protein belongs to the nitroreductase family. Homodimer. It depends on FMN as a cofactor.

Functionally, involved in bioluminescence. It is a good supplier of reduced flavin mononucleotide (FMNH2) to the bioluminescence reaction. Major FMN reductase. It is capable of using both NADH and NADPH as electron donors. As electron acceptor, FMN is the most effective, FAD is considerably effective, and riboflavin is the least effective. This Aliivibrio fischeri (Vibrio fischeri) protein is Major NAD(P)H-flavin oxidoreductase.